The primary structure comprises 208 residues: Holliday junction branch migration complex subunit RuvA (208 aa).

The interval 1-67 (MIGWLHGTIG…EDGQQLYGFE (67 aa)) is domain I. The domain II stretch occupies residues 68–146 (TKADRNLFRL…ERWQQQGGST (79 aa)). The flexible linker stretch occupies residues 147 to 157 (PLRLVEPVAES). The domain III stretch occupies residues 157–208 (SRELRATLEALGYGPEEVSAAVAQAGSQGLDPEQPMEEWLRHCLAWLSRQAG).

It belongs to the RuvA family. As to quaternary structure, homotetramer. Forms an RuvA(8)-RuvB(12)-Holliday junction (HJ) complex. HJ DNA is sandwiched between 2 RuvA tetramers; dsDNA enters through RuvA and exits via RuvB. An RuvB hexamer assembles on each DNA strand where it exits the tetramer. Each RuvB hexamer is contacted by two RuvA subunits (via domain III) on 2 adjacent RuvB subunits; this complex drives branch migration. In the full resolvosome a probable DNA-RuvA(4)-RuvB(12)-RuvC(2) complex forms which resolves the HJ.

Its subcellular location is the cytoplasm. The RuvA-RuvB-RuvC complex processes Holliday junction (HJ) DNA during genetic recombination and DNA repair, while the RuvA-RuvB complex plays an important role in the rescue of blocked DNA replication forks via replication fork reversal (RFR). RuvA specifically binds to HJ cruciform DNA, conferring on it an open structure. The RuvB hexamer acts as an ATP-dependent pump, pulling dsDNA into and through the RuvAB complex. HJ branch migration allows RuvC to scan DNA until it finds its consensus sequence, where it cleaves and resolves the cruciform DNA. This chain is Holliday junction branch migration complex subunit RuvA, found in Synechococcus sp. (strain RCC307).